A 157-amino-acid chain; its full sequence is Vitamin K-dependent protein C (157 aa).

The 157-residue stretch at 1 to 157 (ENGEVDLDIQ…GCGRLHNYGV (157 aa)) folds into the Peptidase S1 domain. Asparagine 17 carries an N-linked (GlcNAc...) asparagine glycan. Aspartate 26 (charge relay system) is an active-site residue. The N-linked (GlcNAc...) asparagine glycan is linked to asparagine 78. 2 disulfides stabilise this stretch: cysteine 96–cysteine 110 and cysteine 121–cysteine 149. Serine 125 functions as the Charge relay system in the catalytic mechanism.

Belongs to the peptidase S1 family. Plasma; synthesized in the liver.

The protein localises to the secreted. The protein resides in the golgi apparatus. It is found in the endoplasmic reticulum. The catalysed reaction is Degradation of blood coagulation factors Va and VIIIa.. In terms of biological role, protein C is a vitamin K-dependent serine protease that regulates blood coagulation by inactivating factors Va and VIIIa in the presence of calcium ions and phospholipids. Exerts a protective effect on the endothelial cell barrier function. This Equus caballus (Horse) protein is Vitamin K-dependent protein C (PROC).